Consider the following 102-residue polypeptide: Large ribosomal subunit protein bL21 (102 aa).

Belongs to the bacterial ribosomal protein bL21 family. As to quaternary structure, part of the 50S ribosomal subunit. Contacts protein L20.

Functionally, this protein binds to 23S rRNA in the presence of protein L20. This Ehrlichia chaffeensis (strain ATCC CRL-10679 / Arkansas) protein is Large ribosomal subunit protein bL21.